We begin with the raw amino-acid sequence, 1024 residues long: Beta-galactosidase (1024 aa).

2 residues coordinate substrate: Asn103 and Asp202. Asp202 serves as a coordination point for Na(+). Mg(2+) is bound by residues Glu417, His419, and Glu462. Substrate contacts are provided by residues Glu462 and 538–541 (EYAH). The active-site Proton donor is the Glu462. Glu538 functions as the Nucleophile in the catalytic mechanism. Asn598 provides a ligand contact to Mg(2+). Na(+) is bound by residues Phe602 and Asn605. Positions 605 and 1000 each coordinate substrate.

Belongs to the glycosyl hydrolase 2 family. As to quaternary structure, homotetramer. The cofactor is Mg(2+). It depends on Na(+) as a cofactor.

The catalysed reaction is Hydrolysis of terminal non-reducing beta-D-galactose residues in beta-D-galactosides.. The polypeptide is Beta-galactosidase (Escherichia coli O157:H7).